The sequence spans 327 residues: Zinc finger protein 444 (327 aa).

Met-1 is modified (N-acetylmethionine). Lys-8 is covalently cross-linked (Glycyl lysine isopeptide (Lys-Gly) (interchain with G-Cter in SUMO2)). Phosphoserine occurs at positions 18 and 104. The region spanning 20 to 104 (WHRFRRFHLG…LEELWGPAAS (85 aa)) is the SCAN box domain. Residues 101–171 (PAASPDGSSA…SPPLAPGLPA (71 aa)) form a disordered region. Polar residues predominate over residues 106–118 (DGSSATRVPQDVT). Residues 134 to 148 (PLAGTAPGAEGPAPG) show a composition bias toward low complexity. C2H2-type zinc fingers lie at residues 179 to 201 (TSCPECGKTSLKPAHLLRHRQSH) and 207 to 229 (HACPECGKAFRRKEHLRRHRDTH). A Glycyl lysine isopeptide (Lys-Gly) (interchain with G-Cter in SUMO2) cross-link involves residue Lys-190. Positions 220–243 (EHLRRHRDTHPGSPGSPGPALRPL) are disordered. Residue Ser-235 is modified to Phosphoserine. 2 C2H2-type zinc fingers span residues 250–272 (HACCECGKTFYWREHLVRHRKTH) and 278–300 (FACWECGKGFGRREHVLRHQRIH). Over residues 305-314 (ASAQGAVAPG) the composition is skewed to low complexity. Residues 305–327 (ASAQGAVAPGPDGGGPFPPWPLG) form a disordered region.

The protein belongs to the krueppel C2H2-type zinc-finger protein family.

The protein localises to the nucleus. Functionally, transcriptional regulator. Binds to the 5'-flanking critical region of the SCARF1 promoter. The polypeptide is Zinc finger protein 444 (ZNF444) (Homo sapiens (Human)).